The primary structure comprises 226 residues: LysM and putative peptidoglycan-binding domain-containing protein 1 (226 aa).

A phosphoserine mark is found at Ser-23 and Ser-33. The LysM domain maps to 40–84; the sequence is LEHQLEPGDTLAGLALKYGVTMEQIKRTNRLYTNDSIFLKKTLYI. Residues 95 to 156 form a disordered region; the sequence is NGLDSEEEND…PSHDLSASDF (62 aa). Residues 98–107 are compositionally biased toward acidic residues; the sequence is DSEEENDGEE. The residue at position 99 (Ser-99) is a Phosphoserine. Polar residues predominate over residues 142-151; sequence QETSTPSHDL. Phosphoserine is present on residues Ser-165, Ser-180, Ser-193, and Ser-211. The disordered stretch occupies residues 170 to 226; the sequence is AAAQKLRKGESGVPEEDTGLYPSSPRMQQRAVLGPVPLTRTSRTQTLRDQEDEIFKL. The span at 215–226 shows a compositional bias: basic and acidic residues; the sequence is TLRDQEDEIFKL.

The protein is LysM and putative peptidoglycan-binding domain-containing protein 1 (Lysmd1) of Mus musculus (Mouse).